The primary structure comprises 393 residues: MAMIGLVGKPNVGKSTMFNALTEKPAEIGNYPFTTIQPNKGIAYITSPCPCKELGVKCNPRNSKCIDGIRHIPVEVIDVAGLVPGAHEGRGMGNKFLDDLRQADAFILVVDASGKTDAEGNPTENYDPVEDVKFLLNEIDMWIYSILTKNWDKLARRAQQEKNIVKALKDQLSGLNIDEDDIKMAIRDMDESPIKWTEEDLLNLAKKLRKISKPMIIAANKADHPDAEKNIERLKKEFKDYIVIPTSAEIELALKRAEKAGIIKRKENDFEIIDESKVNEQMRRAFDYIKDFLKKYGGTGVQECINKAYFDLLDMIVVYPVEDENKFSDKQGNVLPDAFLVKKGSTARDLAYKVHTELGEKFIYAIDAKKKIRVGADYELKHNDIIKIVSAAK.

An OBG-type G domain is found at 2–266 (AMIGLVGKPN…AEKAGIIKRK (265 aa)). GTP contacts are provided by residues 8–15 (GKPNVGKS) and 78–82 (DVAGL). A TGS domain is found at 314 to 390 (DMIVVYPVED…KHNDIIKIVS (77 aa)).

The protein belongs to the TRAFAC class OBG-HflX-like GTPase superfamily. OBG GTPase family.

This is an uncharacterized protein from Methanocaldococcus jannaschii (strain ATCC 43067 / DSM 2661 / JAL-1 / JCM 10045 / NBRC 100440) (Methanococcus jannaschii).